The primary structure comprises 637 residues: Threonine--tRNA ligase (637 aa).

The 61-residue stretch at 1-61 (MPNVKLPDGN…KEDCSLIIVT (61 aa)) folds into the TGS domain. The segment at 242–533 (DHRKLGKALD…LIEHYAGKLP (292 aa)) is catalytic. 3 residues coordinate Zn(2+): cysteine 333, histidine 384, and histidine 510.

Belongs to the class-II aminoacyl-tRNA synthetase family. Homodimer. It depends on Zn(2+) as a cofactor.

Its subcellular location is the cytoplasm. It catalyses the reaction tRNA(Thr) + L-threonine + ATP = L-threonyl-tRNA(Thr) + AMP + diphosphate + H(+). Functionally, catalyzes the attachment of threonine to tRNA(Thr) in a two-step reaction: L-threonine is first activated by ATP to form Thr-AMP and then transferred to the acceptor end of tRNA(Thr). Also edits incorrectly charged L-seryl-tRNA(Thr). The polypeptide is Threonine--tRNA ligase (Legionella pneumophila subsp. pneumophila (strain Philadelphia 1 / ATCC 33152 / DSM 7513)).